The primary structure comprises 138 residues: Acidic phospholipase A2 Cvv-E6h (138 aa).

Residues 1 to 16 (MRTLWIVAVLLLGVEG) form the signal peptide. 7 cysteine pairs are disulfide-bonded: cysteine 42–cysteine 131, cysteine 44–cysteine 60, cysteine 59–cysteine 111, cysteine 65–cysteine 138, cysteine 66–cysteine 104, cysteine 73–cysteine 97, and cysteine 91–cysteine 102. Ca(2+) is bound by residues tyrosine 43, glycine 45, and glycine 47. The active site involves histidine 63. Aspartate 64 serves as a coordination point for Ca(2+). Residue aspartate 105 is part of the active site.

The protein belongs to the phospholipase A2 family. Group II subfamily. D49 sub-subfamily. Ca(2+) is required as a cofactor. Expressed by the venom gland.

The protein resides in the secreted. The catalysed reaction is a 1,2-diacyl-sn-glycero-3-phosphocholine + H2O = a 1-acyl-sn-glycero-3-phosphocholine + a fatty acid + H(+). Functionally, snake venom phospholipase A2 (PLA2) that shows very low inhibition of ADP-induced platelet aggregation in platelet-rich plasma of human, rabbit and guinea pig. In vivo, shows efficient edema-inducing activities in rat paws. PLA2 catalyzes the calcium-dependent hydrolysis of the 2-acyl groups in 3-sn-phosphoglycerides. The sequence is that of Acidic phospholipase A2 Cvv-E6h from Crotalus viridis viridis (Prairie rattlesnake).